A 375-amino-acid chain; its full sequence is Holliday junction branch migration complex subunit RuvB (375 aa).

The segment at 1–50 (MAIVSSKSPDPAERRSQAKTKPSVSEPQDSLVRPQAAPEESQRPEDQIRP) is disordered. The segment at 13–209 (ERRSQAKTKP…FGLVQRLRFY (197 aa)) is large ATPase domain (RuvB-L). Polar residues predominate over residues 19-28 (KTKPSVSEPQ). Over residues 40–49 (ESQRPEDQIR) the composition is skewed to basic and acidic residues. Residues Ile48, Arg49, Gly90, Lys93, Thr94, Thr95, 156-158 (EDF), Arg199, Tyr209, and Arg246 each bind ATP. Thr94 contributes to the Mg(2+) binding site. A small ATPAse domain (RuvB-S) region spans residues 210-280 (EVEALTDIVQ…IAATALELYN (71 aa)). The tract at residues 283–375 (PCGLDWTDRR…LQQLLTEPET (93 aa)) is head domain (RuvB-H). DNA is bound by residues Arg338 and Arg343.

Belongs to the RuvB family. Homohexamer. Forms an RuvA(8)-RuvB(12)-Holliday junction (HJ) complex. HJ DNA is sandwiched between 2 RuvA tetramers; dsDNA enters through RuvA and exits via RuvB. An RuvB hexamer assembles on each DNA strand where it exits the tetramer. Each RuvB hexamer is contacted by two RuvA subunits (via domain III) on 2 adjacent RuvB subunits; this complex drives branch migration. In the full resolvosome a probable DNA-RuvA(4)-RuvB(12)-RuvC(2) complex forms which resolves the HJ.

Its subcellular location is the cytoplasm. It catalyses the reaction ATP + H2O = ADP + phosphate + H(+). Functionally, the RuvA-RuvB-RuvC complex processes Holliday junction (HJ) DNA during genetic recombination and DNA repair, while the RuvA-RuvB complex plays an important role in the rescue of blocked DNA replication forks via replication fork reversal (RFR). RuvA specifically binds to HJ cruciform DNA, conferring on it an open structure. The RuvB hexamer acts as an ATP-dependent pump, pulling dsDNA into and through the RuvAB complex. RuvB forms 2 homohexamers on either side of HJ DNA bound by 1 or 2 RuvA tetramers; 4 subunits per hexamer contact DNA at a time. Coordinated motions by a converter formed by DNA-disengaged RuvB subunits stimulates ATP hydrolysis and nucleotide exchange. Immobilization of the converter enables RuvB to convert the ATP-contained energy into a lever motion, pulling 2 nucleotides of DNA out of the RuvA tetramer per ATP hydrolyzed, thus driving DNA branch migration. The RuvB motors rotate together with the DNA substrate, which together with the progressing nucleotide cycle form the mechanistic basis for DNA recombination by continuous HJ branch migration. Branch migration allows RuvC to scan DNA until it finds its consensus sequence, where it cleaves and resolves cruciform DNA. This chain is Holliday junction branch migration complex subunit RuvB, found in Synechococcus elongatus (strain ATCC 33912 / PCC 7942 / FACHB-805) (Anacystis nidulans R2).